A 209-amino-acid polypeptide reads, in one-letter code: Casparian strip membrane protein 1 (209 aa).

Topologically, residues 1–46 (MSSGANATTIDVPETRAEAKGKAPLIAAPIVATTKATPHPNAGWKK) are cytoplasmic. Residues 47 to 67 (GLAIFDFLLRLAAIAATLAAA) form a helical membrane-spanning segment. The Extracellular portion of the chain corresponds to 68 to 95 (TTMGTTDETLPFFTQFFQFQASFDDLPA). The helical transmembrane segment at 96–116 (FMFFVVATAIASGYLALSLPF) threads the bilayer. Residues 117–137 (SLVSIFRPHAQGIRLLLIISD) lie on the Cytoplasmic side of the membrane. Residues 138–158 (TVMLALTTAGAASATAIVYLA) traverse the membrane as a helical segment. The Extracellular segment spans residues 159 to 183 (HNGDSSANWIAICQQFTDFCQSVSG). Residues 184 to 204 (AVVASFIAVVIFMLLVMMSAL) form a helical membrane-spanning segment. Topologically, residues 205–209 (ALRKH) are cytoplasmic.

Belongs to the Casparian strip membrane proteins (CASP) family. Homodimer and heterodimers.

Its subcellular location is the cell membrane. In terms of biological role, regulates membrane-cell wall junctions and localized cell wall deposition. Required for establishment of the Casparian strip membrane domain (CSD) and the subsequent formation of Casparian strips, a cell wall modification of the root endodermis that determines an apoplastic barrier between the intraorganismal apoplasm and the extraorganismal apoplasm and prevents lateral diffusion. In Vitis vinifera (Grape), this protein is Casparian strip membrane protein 1.